The primary structure comprises 221 residues: Alpha-ketoglutarate-dependent dioxygenase alkB homolog 7, mitochondrial (221 aa).

A mitochondrion-targeting transit peptide spans 1 to 23 (MAGSRRLAMRLLSGCAWVRGSDS). 2 residues coordinate Fe cation: His-121 and Asp-123. Tyr-165 contributes to the 2-oxoglutarate binding site. Position 177 (His-177) interacts with Fe cation. 2-oxoglutarate is bound by residues 197-199 (RIS) and Arg-203.

This sequence belongs to the alkB family. Requires Fe(2+) as cofactor. Widely expressed.

Its subcellular location is the mitochondrion matrix. May function as protein hydroxylase; can catalyze auto-hydroxylation at Leu-110 (in vitro), but this activity may be due to the absence of the true substrate. Required to induce programmed necrosis in response to DNA damage caused by cytotoxic alkylating agents. Acts by triggering the collapse of mitochondrial membrane potential and loss of mitochondrial function that leads to energy depletion and cell death. ALKBH7-mediated necrosis is probably required to prevent the accumulation of cells with DNA damage. Does not display DNA demethylase activity. Involved in fatty acid metabolism. This is Alpha-ketoglutarate-dependent dioxygenase alkB homolog 7, mitochondrial (Alkbh7) from Mus musculus (Mouse).